The primary structure comprises 371 residues: Cytochrome b (371 aa).

The next 4 membrane-spanning stretches (helical) occupy residues F25–V45, W69–I90, W105–L125, and F170–I190. Heme b-binding residues include H75 and H89. Positions 174 and 188 each coordinate heme b. Position 193 (H193) interacts with a ubiquinone. Helical transmembrane passes span H218–F238, L280–H300, L312–T332, and F339–P358.

It belongs to the cytochrome b family. As to quaternary structure, the cytochrome bc1 complex contains 3 respiratory subunits (MT-CYB, CYC1 and UQCRFS1), 2 core proteins (UQCRC1 and UQCRC2) and probably 6 low-molecular weight proteins. It depends on heme b as a cofactor.

The protein localises to the mitochondrion inner membrane. Component of the ubiquinol-cytochrome c reductase complex (complex III or cytochrome b-c1 complex) that is part of the mitochondrial respiratory chain. The b-c1 complex mediates electron transfer from ubiquinol to cytochrome c. Contributes to the generation of a proton gradient across the mitochondrial membrane that is then used for ATP synthesis. This is Cytochrome b (MT-CYB) from Liasis olivaceus (Olive python).